Here is a 1269-residue protein sequence, read N- to C-terminus: Furin-like protease 1, isoforms 1/1-X/2 (1269 aa).

Residues 1-57 form a disordered region; the sequence is MKNDVVRWSRQPTSNTTNSSSSSRSDSNSTHKHRSKSNKLNARQLGSNAARSCQQRS. The span at 13–28 shows a compositional bias: low complexity; it reads TSNTTNSSSSSRSDSN. Residues Asn-15, Asn-18, and Asn-28 are each glycosylated (N-linked (GlcNAc...) asparagine). Over residues 38–57 the composition is skewed to polar residues; the sequence is NKLNARQLGSNAARSCQQRS. Asn-108 is a glycosylation site (N-linked (GlcNAc...) asparagine). Residues 119–139 form a helical membrane-spanning segment; that stretch reads VFLLALQFSAVVFLCNINVGF. Low complexity predominate over residues 150-163; sequence SAGGSSPAAPSSAP. A disordered region spans residues 150–187; it reads SAGGSSPAAPSSAPSSPPTVAVPPPPPPSSALKVDPNG. Positions 164-178 are enriched in pro residues; sequence SSPPTVAVPPPPPPS. An N-linked (GlcNAc...) asparagine glycan is attached at Asn-333. Positions 340 to 654 constitute a Peptidase S8 domain; it reads MWYLNRGGGL…YGLMDAAEMV (315 aa). Residues Asp-372 and His-413 each act as charge relay system in the active site. Asn-426 carries an N-linked (GlcNAc...) asparagine glycan. Cystine bridges form between Cys-430-Cys-579 and Cys-522-Cys-552. The active-site Charge relay system is the Ser-587. Asn-606 carries an N-linked (GlcNAc...) asparagine glycan. The P/Homo B domain occupies 662–793; sequence AVPEQQRCEI…SLIFYGTTQS (132 aa). A disulfide bridge connects residues Cys-669 and Cys-695. 2 N-linked (GlcNAc...) asparagine glycosylation sites follow: Asn-727 and Asn-814. Disordered regions lie at residues 796 to 875, 891 to 1015, 1031 to 1050, and 1057 to 1083; these read PNDP…PPKQ, ANGK…NSRI, ELEP…AKQG, and LFKP…PSQT. Composition is skewed to low complexity over residues 811 to 821 and 835 to 851; these read TTPNSSSTTSN and PNNF…LPLG. N-linked (GlcNAc...) asparagine glycosylation is present at Asn-857. Residues 858–868 are compositionally biased toward polar residues; sequence KSSYVTNNPLL. N-linked (GlcNAc...) asparagine glycans are attached at residues Asn-897 and Asn-908. 2 stretches are compositionally biased toward low complexity: residues 905 to 915 and 929 to 940; these read NKGNKSNNGNK and TTQSTIIQTSTS. Residues 975-985 are compositionally biased toward basic and acidic residues; that stretch reads KSYDEKSRKVV. Asn-994 carries an N-linked (GlcNAc...) asparagine glycan. A compositionally biased stretch (polar residues) spans 1005–1014; it reads ESTTTSSNSR. A compositionally biased stretch (polar residues) spans 1062–1074; that stretch reads NGGNSRQGNTKKS. A helical membrane pass occupies residues 1233-1253; the sequence is LGLSLLFFMIMQVFFLNFKHA.

This sequence belongs to the peptidase S8 family. Furin subfamily. Requires Ca(2+) as cofactor. In terms of tissue distribution, in adults, isoform 1-X is expressed in CNS, fat body and female reproductive tissues, and in embryos, in CNS, tracheal pits, hindgut, posterior spiracles and anal pads.

The protein localises to the golgi apparatus membrane. It catalyses the reaction Release of mature proteins from their proproteins by cleavage of -Arg-Xaa-Yaa-Arg-|-Zaa- bonds, where Xaa can be any amino acid and Yaa is Arg or Lys. Releases albumin, complement component C3 and von Willebrand factor from their respective precursors.. Furin is likely to represent the ubiquitous endoprotease activity within constitutive secretory pathways and capable of cleavage at the RX(K/R)R consensus motif. This is Furin-like protease 1, isoforms 1/1-X/2 (Fur1) from Drosophila melanogaster (Fruit fly).